We begin with the raw amino-acid sequence, 243 residues long: Ribonuclease 3 (243 aa).

The 126-residue stretch at 19-144 (FNTLHKLLGF…LVGAIYLDRG (126 aa)) folds into the RNase III domain. Glu61 lines the Mg(2+) pocket. Asp65 is a catalytic residue. 2 residues coordinate Mg(2+): Asn130 and Glu133. Glu133 is a catalytic residue. One can recognise a DRBM domain in the interval 172–240 (SYKSLLIEWC…SKRAYYALQN (69 aa)).

Belongs to the ribonuclease III family. In terms of assembly, homodimer. Mg(2+) serves as cofactor.

It is found in the cytoplasm. It catalyses the reaction Endonucleolytic cleavage to 5'-phosphomonoester.. Its function is as follows. Digests double-stranded RNA. Involved in the processing of primary rRNA transcript to yield the immediate precursors to the large and small rRNAs (23S and 16S). Processes some mRNAs, and tRNAs when they are encoded in the rRNA operon. Processes pre-crRNA and tracrRNA of type II CRISPR loci if present in the organism. The polypeptide is Ribonuclease 3 (rnc) (Zunongwangia profunda (strain DSM 18752 / CCTCC AB 206139 / SM-A87) (Wangia profunda)).